The chain runs to 82 residues: ATP synthase subunit c (82 aa).

2 helical membrane-spanning segments follow: residues 7-27 and 57-77; these read AASV…PGIG and LAFM…LLFA.

The protein belongs to the ATPase C chain family. As to quaternary structure, F-type ATPases have 2 components, F(1) - the catalytic core - and F(0) - the membrane proton channel. F(1) has five subunits: alpha(3), beta(3), gamma(1), delta(1), epsilon(1). F(0) has four main subunits: a(1), b(1), b'(1) and c(10-14). The alpha and beta chains form an alternating ring which encloses part of the gamma chain. F(1) is attached to F(0) by a central stalk formed by the gamma and epsilon chains, while a peripheral stalk is formed by the delta, b and b' chains.

The protein resides in the cellular thylakoid membrane. F(1)F(0) ATP synthase produces ATP from ADP in the presence of a proton or sodium gradient. F-type ATPases consist of two structural domains, F(1) containing the extramembraneous catalytic core and F(0) containing the membrane proton channel, linked together by a central stalk and a peripheral stalk. During catalysis, ATP synthesis in the catalytic domain of F(1) is coupled via a rotary mechanism of the central stalk subunits to proton translocation. Its function is as follows. Key component of the F(0) channel; it plays a direct role in translocation across the membrane. A homomeric c-ring of between 10-14 subunits forms the central stalk rotor element with the F(1) delta and epsilon subunits. In Synechococcus sp. (strain WH7803), this protein is ATP synthase subunit c.